We begin with the raw amino-acid sequence, 605 residues long: Hepatocyte nuclear factor 1-alpha-A (605 aa).

The tract at residues 1–31 is dimerization; the sequence is MASQLSYLQRELLQALLESGVTKEALKKALA. Positions 1 to 32 constitute an HNF-p1 domain; the sequence is MASQLSYLQRELLQALLESGVTKEALKKALAD. Residues 57–81 are disordered; that stretch reads QLPNGLGESHISEDESSDDGEDFTP. A POU-specific atypical domain is found at 85 to 180; sequence KELERLSPEE…IARLFTFTEF (96 aa). Interaction with DNA stretches follow at residues 128-130, 141-147, 153-156, 206-209, 266-268, and 273-276; these read QRE, HLSQHLN, KTQK, RFKW, RVY, and NRRK. Residues 200-208 carry the Nuclear localization signal motif; it reads KKMRRNRFK. Positions 202 to 282 form a DNA-binding region, homeobox; HNF1-type; sequence MRRNRFKWGP…NRRKEEAFRH (81 aa). Positions 321–335 are enriched in polar residues; that stretch reads DRSAVMANSQSTPSP. Positions 321 to 343 are disordered; the sequence is DRSAVMANSQSTPSPSALEPSHS. The tract at residues 448–453 is not present in other members of the HNF1 family; sequence PSHQLH.

Belongs to the HNF1 homeobox family. As to quaternary structure, binds DNA as dimer. Forms a homodimer or heterodimer with HNF1-alpha-B. Potentially also form a heterodimer with HNF1-beta. In terms of tissue distribution, protein expressed in liver, stomach, small intestine, colon and kidney. Not expressed in spleen, lung, blood, heart muscle, skeletal muscle, testis and brain.

It is found in the nucleus. In terms of biological role, transcriptional activator that regulates the tissue specific expression of multiple genes, especially in pancreas and liver. Binds to the hepatocyte specific promoter element HP1. Binds to the inverted palindrome 5'-GTTAATNATTAAC-3'. The sequence is that of Hepatocyte nuclear factor 1-alpha-A (hnf1a-a) from Xenopus laevis (African clawed frog).